Here is a 299-residue protein sequence, read N- to C-terminus: tRNA-cytidine(32) 2-sulfurtransferase (299 aa).

The PP-loop motif motif lies at serine 56–serine 61. Residues cysteine 131, cysteine 134, and cysteine 222 each coordinate [4Fe-4S] cluster.

The protein belongs to the TtcA family. In terms of assembly, homodimer. Mg(2+) is required as a cofactor. [4Fe-4S] cluster serves as cofactor.

The protein resides in the cytoplasm. It carries out the reaction cytidine(32) in tRNA + S-sulfanyl-L-cysteinyl-[cysteine desulfurase] + AH2 + ATP = 2-thiocytidine(32) in tRNA + L-cysteinyl-[cysteine desulfurase] + A + AMP + diphosphate + H(+). The protein operates within tRNA modification. Its function is as follows. Catalyzes the ATP-dependent 2-thiolation of cytidine in position 32 of tRNA, to form 2-thiocytidine (s(2)C32). The sulfur atoms are provided by the cysteine/cysteine desulfurase (IscS) system. The sequence is that of tRNA-cytidine(32) 2-sulfurtransferase from Xylella fastidiosa (strain 9a5c).